We begin with the raw amino-acid sequence, 408 residues long: MHATEDETTTIPRFPFQRASAFEPPAEFARLRANEPISQVELFDGSLAWLVVKHEDVCRVATDERLSKERTRLGFPELSAGGKAAAKNKPTFVDMDAPAHMNQRSMVEPFFTEDHVENLRPYIKETVQGLLNDMVANGCEEPVDLIEKFALPVPSYIIYTILGVPFEDLEYLTEQNAIRSNGSGTAQEAAAANQQLLKYLAKLVDQRLQEPKDDLIGRLVDQQLVPGHIEKSDAVQIAFLLLVAGNATMVNMIALGVVTLMQNPSQLEELKADPTLVPGFVEELCRYHTGSSMAMKRVAKEDMELGGKLIRAGEGIIASNQSANRDEDVFPNPDVFDMHRDFDSRDGLGFGFGPHRCIAELLAKAELEIVFETLFATLPDLRVSIPLDEIECTPRHKDVGIVRLPVKW.

Position 357 (Cys357) interacts with heme.

This sequence belongs to the cytochrome P450 family. The cofactor is heme.

The sequence is that of Cytochrome P450 55A3 (CYP55A3) from Fusarium lichenicola (Cylindrocarpon lichenicola).